A 144-amino-acid chain; its full sequence is 3-dehydroquinate dehydratase (144 aa).

Tyr22 functions as the Proton acceptor in the catalytic mechanism. Substrate is bound by residues Asn74, His80, and Asp87. His100 functions as the Proton donor in the catalytic mechanism. Substrate-binding positions include 101–102 (LS) and Arg111.

This sequence belongs to the type-II 3-dehydroquinase family. As to quaternary structure, homododecamer.

The enzyme catalyses 3-dehydroquinate = 3-dehydroshikimate + H2O. The protein operates within metabolic intermediate biosynthesis; chorismate biosynthesis; chorismate from D-erythrose 4-phosphate and phosphoenolpyruvate: step 3/7. In terms of biological role, catalyzes a trans-dehydration via an enolate intermediate. The chain is 3-dehydroquinate dehydratase from Clostridium perfringens (strain ATCC 13124 / DSM 756 / JCM 1290 / NCIMB 6125 / NCTC 8237 / Type A).